A 383-amino-acid chain; its full sequence is Putative glutamate--cysteine ligase 2 (383 aa).

The protein belongs to the glutamate--cysteine ligase type 2 family. YbdK subfamily.

The catalysed reaction is L-cysteine + L-glutamate + ATP = gamma-L-glutamyl-L-cysteine + ADP + phosphate + H(+). Functionally, ATP-dependent carboxylate-amine ligase which exhibits weak glutamate--cysteine ligase activity. The protein is Putative glutamate--cysteine ligase 2 of Clavibacter sepedonicus (Clavibacter michiganensis subsp. sepedonicus).